Here is a 147-residue protein sequence, read N- to C-terminus: Immunity protein YxxD (147 aa).

Probably interacts with cognate toxin YxiD but not with other non-cognate toxins. The interaction inhibits the toxic activity of YxiD.

The protein localises to the cytoplasm. Immunity component of one of 6 LXG toxin-immunity modules in this strain. They promote kin selection, mediate competition in biofilms, and drive spatial segregation of different strains, indicating that LXG toxins may help avoid warfare between strains in biofilms. Mediates intercellular competition during biofilm formation; disruption of the operon disadvantages the bacteria, but overexpression of the cognate immunity protein restores growth in competition with wild-type. In situ neutralizes the toxic effect of cognate toxin YxiD. Neutralizes the toxic activity of cognate toxin YxiD upon expression in E.coli. Does not have immunity protein activity on other LXG toxins. In Bacillus subtilis (strain 168), this protein is Immunity protein YxxD (yxxD).